The following is a 245-amino-acid chain: 1-(5-phosphoribosyl)-5-[(5-phosphoribosylamino)methylideneamino] imidazole-4-carboxamide isomerase (245 aa).

The active-site Proton acceptor is aspartate 7. Aspartate 129 functions as the Proton donor in the catalytic mechanism.

It belongs to the HisA/HisF family.

Its subcellular location is the cytoplasm. It carries out the reaction 1-(5-phospho-beta-D-ribosyl)-5-[(5-phospho-beta-D-ribosylamino)methylideneamino]imidazole-4-carboxamide = 5-[(5-phospho-1-deoxy-D-ribulos-1-ylimino)methylamino]-1-(5-phospho-beta-D-ribosyl)imidazole-4-carboxamide. The protein operates within amino-acid biosynthesis; L-histidine biosynthesis; L-histidine from 5-phospho-alpha-D-ribose 1-diphosphate: step 4/9. The sequence is that of 1-(5-phosphoribosyl)-5-[(5-phosphoribosylamino)methylideneamino] imidazole-4-carboxamide isomerase from Pectobacterium atrosepticum (strain SCRI 1043 / ATCC BAA-672) (Erwinia carotovora subsp. atroseptica).